The sequence spans 46 residues: Endochitinase 1A (46 aa).

This sequence belongs to the glycosyl hydrolase 19 family. Chitinase class I subfamily.

It catalyses the reaction Random endo-hydrolysis of N-acetyl-beta-D-glucosaminide (1-&gt;4)-beta-linkages in chitin and chitodextrins.. Its function is as follows. Defense against chitin-containing fungal and bacterial pathogens. This chain is Endochitinase 1A, found in Arachis hypogaea (Peanut).